The primary structure comprises 265 residues: Cytochrome c oxidase subunit 3 (265 aa).

The next 6 helical transmembrane spans lie at 16-36 (PWPI…VMYM), 41-61 (GGAT…FVWW), 84-104 (YGSI…FWAS), 162-182 (AVYA…FQGM), 200-220 (FFLA…FLIV), and 245-265 (WHFV…WGGI).

The protein belongs to the cytochrome c oxidase subunit 3 family. In terms of assembly, component of the cytochrome c oxidase (complex IV, CIV), a multisubunit enzyme composed of a catalytic core of 3 subunits and several supernumerary subunits. The complex exists as a monomer or a dimer and forms supercomplexes (SCs) in the inner mitochondrial membrane with ubiquinol-cytochrome c oxidoreductase (cytochrome b-c1 complex, complex III, CIII).

Its subcellular location is the mitochondrion inner membrane. The enzyme catalyses 4 Fe(II)-[cytochrome c] + O2 + 8 H(+)(in) = 4 Fe(III)-[cytochrome c] + 2 H2O + 4 H(+)(out). Component of the cytochrome c oxidase, the last enzyme in the mitochondrial electron transport chain which drives oxidative phosphorylation. The respiratory chain contains 3 multisubunit complexes succinate dehydrogenase (complex II, CII), ubiquinol-cytochrome c oxidoreductase (cytochrome b-c1 complex, complex III, CIII) and cytochrome c oxidase (complex IV, CIV), that cooperate to transfer electrons derived from NADH and succinate to molecular oxygen, creating an electrochemical gradient over the inner membrane that drives transmembrane transport and the ATP synthase. Cytochrome c oxidase is the component of the respiratory chain that catalyzes the reduction of oxygen to water. Electrons originating from reduced cytochrome c in the intermembrane space (IMS) are transferred via the dinuclear copper A center (CU(A)) of subunit 2 and heme A of subunit 1 to the active site in subunit 1, a binuclear center (BNC) formed by heme A3 and copper B (CU(B)). The BNC reduces molecular oxygen to 2 water molecules using 4 electrons from cytochrome c in the IMS and 4 protons from the mitochondrial matrix. In Aegilops columnaris (Goatgrass), this protein is Cytochrome c oxidase subunit 3 (COX3).